The following is a 624-amino-acid chain: MTIKKYTLLTALSVTAFSGWAQGNNTTDNNNEMVVTANRFPQPKSSVLAPVDVVTRADIDRWQSTNINDVLRRLPGINIAQYGGPRQLSSLFIRGTNSSHVLVLVDGVRLNQAGISGSSDLSQIPISLVQRIEYIRGPRSAVYGSDAIGGVVNIITERETLGSTLTAGLGSNGYQNYNGSTQQKLGDDTTITLAGNYDYSKGYDVVAKGNTGMASQPDRDGYLGKMLWLGANHKFNEQFSGFVRGYGFDNRSDYDSYYYPGSPLVDTRSLSSRTYDTGINFSNGGYASQLIGSYSRTQDYNYDPSYGRYDQSATLDDISQYNLQWTNTYQLGLGNVGGGLDWQKQTTEPGTNYLSNGYEQRNTGVYGTVQQFVGPVTLEGAIRGDDNSQFGWHTTWQSSAGWEFVDGYRLIGSYGTAFKAPNLGQIYSSTYGNRDLKPEESTQWEAAITGITGPLDWRLSAYRNDIDQMIATRGVYPNSRYYNVEKATIKGVEWTGSFETGPLSHQVTLEYLDPRNADTHEILARRAKQQVKYQLDWQMADLDWSVTYQYIGQRYDSVFDPITYAASPVKLAGISLWDLAVSYPVTSHLTVRGRIANLFDKDYEMVYGYQTPGREYYFTGSYNF.

The first 21 residues, 1-21 (MTIKKYTLLTALSVTAFSGWA), serve as a signal peptide directing secretion. A TonB box motif is present at residues 31–38 (NEMVVTAN). A TBDR plug domain is found at 43–157 (PKSSVLAPVD…IGGVVNIITE (115 aa)). Residues Leu88, Ser90, Asn97, and 115 to 116 (IS) contribute to the cyanocob(III)alamin site. Positions 160–624 (TLGSTLTAGL…EYYFTGSYNF (465 aa)) constitute a TBDR beta-barrel domain. The next 3 beta stranded transmembrane spans lie at 163–170 (STLTAGLG), 174–183 (YQNYNGSTQQ), and 189–200 (TTITLAGNYDYS). Residues Asp204, Gln216, Asp218, and Asp220 each contribute to the Ca(2+) site. 2 beta stranded membrane-spanning segments follow: residues 222 to 232 (YLGKMLWLGAN) and 237 to 253 (EQFS…NRSD). Ca(2+) contacts are provided by Tyr254, Asp255, and Asp266. Beta stranded transmembrane passes span 268-282 (RSLS…INFS), 284-301 (GGYA…QDYN), 314-330 (TLDD…NTYQ), 333-342 (LGNVGGGLDW), 358-374 (YEQR…QFVG), 376-386 (VTLEGAIRGDD), 390-405 (FGWH…WEFV), 408-422 (YRLI…KAPN), 440-449 (ESTQWEAAIT), 455-464 (LDWRLSAYRN), 481-498 (YYNV…TGSF), 502-517 (PLSH…PRNA), 525-537 (RRAK…QLDW), 543-557 (DWSV…RYDS), 568-582 (PVKL…LAVS), 595-606 (IANLFDKDYEMV), and 612-624 (PGRE…SYNF). Residue Thr314 coordinates cyanocob(III)alamin. Position 525 (Arg525) interacts with cyanocob(III)alamin. The TonB C-terminal box motif lies at 607–624 (YGYQTPGREYYFTGSYNF).

Belongs to the TonB-dependent receptor family. BtuB (TC 1.B.14.3.1) subfamily.

It is found in the cell outer membrane. Its function is as follows. Involved in the active translocation of vitamin B12 (cyanocobalamin) across the outer membrane to the periplasmic space. It derives its energy for transport by interacting with the trans-periplasmic membrane protein TonB. The chain is Vitamin B12 transporter BtuB from Yersinia pseudotuberculosis serotype O:1b (strain IP 31758).